The chain runs to 775 residues: ATP-dependent 6-phosphofructokinase 2 (775 aa).

Residues 1–390 (MTNTILDTYS…YHSAYRHLNT (390 aa)) are N-terminal catalytic PFK domain 1. ATP is bound by residues Gly-25, 88–89 (RC), and 118–121 (GDGS). Asp-119 contributes to the Mg(2+) binding site. Residues 164-166 (SID), Arg-201, 208-210 (MGR), Glu-264, Arg-292, and 298-301 (HIQR) contribute to the substrate site. The Proton acceptor role is filled by Asp-166. Positions 391–404 (SDHPKMVLPEDKRM) are interdomain linker. Positions 405 to 775 (RVAIIHVGAP…GRSSLYAIPN (371 aa)) are C-terminal regulatory PFK domain 2. Residues 537-541 (SMSNN), 582-584 (QGA), Asp-640, and 672-675 (HFQQ) contribute to the beta-D-fructose 2,6-bisphosphate site.

The protein belongs to the phosphofructokinase type A (PFKA) family. ATP-dependent PFK group I subfamily. Eukaryotic two domain clade 'E' sub-subfamily. In terms of assembly, homotetramer. Mg(2+) is required as a cofactor.

It localises to the cytoplasm. It carries out the reaction beta-D-fructose 6-phosphate + ATP = beta-D-fructose 1,6-bisphosphate + ADP + H(+). Its pathway is carbohydrate degradation; glycolysis; D-glyceraldehyde 3-phosphate and glycerone phosphate from D-glucose: step 3/4. With respect to regulation, allosterically activated by ADP, AMP, or fructose 2,6-bisphosphate, and allosterically inhibited by ATP or citrate. Functionally, catalyzes the phosphorylation of D-fructose 6-phosphate to fructose 1,6-bisphosphate by ATP, the first committing step of glycolysis. This chain is ATP-dependent 6-phosphofructokinase 2 (pfkB), found in Aspergillus oryzae (strain ATCC 42149 / RIB 40) (Yellow koji mold).